Here is a 101-residue protein sequence, read N- to C-terminus: Small ribosomal subunit protein bS18c (101 aa).

This sequence belongs to the bacterial ribosomal protein bS18 family. Part of the 30S ribosomal subunit.

The protein resides in the plastid. It localises to the chloroplast. The protein is Small ribosomal subunit protein bS18c of Gossypium hirsutum (Upland cotton).